Reading from the N-terminus, the 159-residue chain is MSEEKSRNGPARLKLVLGGATLGVVALATVAFGMKYTDQRPFCTSCHIMNPVGVTHKLSGHANISCNDCHAPHNLLAKLPFKAIAGARDVYMNTLGHPGDLILAGMETKEVVNANCKACHTMTNVEVASMEAKKYCTDCHRNVQHMRMKPISTREVADE.

Topologically, residues 2 to 14 are cytoplasmic; that stretch reads SEEKSRNGPARLK. The helical; Signal-anchor for type II membrane protein transmembrane segment at 15–33 threads the bilayer; the sequence is LVLGGATLGVVALATVAFG. Residues 34-159 are Periplasmic-facing; it reads MKYTDQRPFC…PISTREVADE (126 aa). Cys-43, Cys-46, Met-49, His-61, and Cys-66 together coordinate heme. Position 67 (Asn-67) interacts with a menaquinol. Heme contacts are provided by Cys-69 and His-70. 2 residues coordinate a menaquinol: Lys-82 and Asp-89. Asp-89 is a binding site for heme. The interval 99–100 is interaction with NrfA; it reads GD. Positions 116, 119, 120, 136, 139, 140, and 145 each coordinate heme. Positions 123-158 are interaction with NrfA; it reads TNVEVASMEAKKYCTDCHRNVQHMRMKPISTREVAD.

This sequence belongs to the NapC/NirT/NrfH family. In terms of assembly, component of the NrfHA cytochrome c nitrite reductase complex composed of 4 NrfA catalytic subunits and 2 NrfH quinone-binding subunits. Interacts with NrfA homodimer. Heme is required as a cofactor.

The protein resides in the cell inner membrane. Its function is as follows. Electron donor subunit of the cytochrome c nitrite reductase holocomplex NrfHA. Acquires electrons from the menaquinone pool and mediates their transfer to the catalytic subunit NrfA in an anaerobic respiratory process of nitrite. The other biological function of the NrfHA holocomplex is to detoxify nitrite. This function is essential for the survival of this organism as it enables it to overcome inhibition by nitrite, which is produced by other organisms living in the same environment. The chain is Cytochrome c nitrite reductase subunit NrfH from Nitratidesulfovibrio vulgaris (strain ATCC 29579 / DSM 644 / CCUG 34227 / NCIMB 8303 / VKM B-1760 / Hildenborough) (Desulfovibrio vulgaris).